A 490-amino-acid chain; its full sequence is Cytochrome P450 2C28 (490 aa).

Residue serine 127 is modified to Phosphoserine. N6-acetyllysine occurs at positions 249 and 375. Cysteine 435 serves as a coordination point for heme.

This sequence belongs to the cytochrome P450 family. Heme is required as a cofactor. As to expression, liver.

It is found in the endoplasmic reticulum membrane. Its subcellular location is the microsome membrane. The catalysed reaction is an organic molecule + reduced [NADPH--hemoprotein reductase] + O2 = an alcohol + oxidized [NADPH--hemoprotein reductase] + H2O + H(+). Its function is as follows. Catalyzes the N-demethylation of aminopyrine and benzphetamine, but does not catalyze the hydroxylation of tolbutamide, testosterone, and progesterone. In Mesocricetus auratus (Golden hamster), this protein is Cytochrome P450 2C28 (CYP2C28).